We begin with the raw amino-acid sequence, 245 residues long: 14-3-3 protein zeta/delta (245 aa).

N-acetylmethionine is present on M1. Residue K3 is modified to N6-acetyllysine. Residue S58 is modified to Phosphoserine; by PKA. K68 carries the N6-acetyllysine modification. Phosphoserine occurs at positions 184, 207, and 210. T232 carries the phosphothreonine; by CK1 modification.

It belongs to the 14-3-3 family. Homodimer. Heterodimerizes with YWHAE. Homo- and heterodimerization is inhibited by phosphorylation on Ser-58. Interacts with FOXO4, NOXA1, SSH1 ARHGEF2, CDK16 and BSPRY. Interacts with WEE1 (C-terminal). Interacts with MLF1 (phosphorylated form); the interaction retains it in the cytoplasm. Interacts with BAX; the interaction occurs in the cytoplasm. Under stress conditions, MAPK8-mediated phosphorylation releases BAX to mitochondria. Interacts with TP53; the interaction enhances p53 transcriptional activity. The Ser-58 phosphorylated form inhibits this interaction and p53 transcriptional activity. Interacts with ABL1 (phosphorylated form); the interaction retains ABL1 in the cytoplasm. Interacts with PKA-phosphorylated AANAT; the interaction modulates AANAT enzymatic activity by increasing affinity for arylalkylamines and acetyl-CoA and protecting the enzyme from dephosphorylation and proteasomal degradation. It may also prevent thiol-dependent inactivation. Interacts with AKT1; the interaction phosphorylates YWHAZ and modulates dimerization. Interacts with GAB2. Interacts with BCL2L11, SAMSN1 and TLK2. Interacts with phosphorylated RAF1; the interaction is inhibited when YWHAZ is phosphorylated on Thr-232. Interacts with Thr-phosphorylated ITGB2. Interacts with the 'Thr-369' phosphorylated form of DAPK2. Interacts with PI4KB, TBC1D22A and TBC1D22B. Interacts with ZFP36L1 (via phosphorylated form); this interaction occurs in a p38 MAPK- and AKT-signaling pathways. Interacts with SLITRK1. Interacts with AK5, LDB1, MADD, MARK3, PDE1A and SMARCB1. Interacts with YWHAZ. Interacts with MEFV. Interacts with ADAM22 (via C-terminus). The delta, brain-specific form differs from the zeta form in being phosphorylated. Phosphorylation on Ser-184 by MAPK8; promotes dissociation of BAX and translocation of BAX to mitochondria. Phosphorylation on Thr-232; inhibits binding of RAF1. Phosphorylated on Ser-58 by PKA and protein kinase C delta type catalytic subunit in a sphingosine-dependent fashion. Phosphorylation on Ser-58 by PKA; disrupts homodimerization and heterodimerization with YHAE and TP53.

It localises to the cytoplasm. Its subcellular location is the melanosome. Adapter protein implicated in the regulation of a large spectrum of both general and specialized signaling pathways. Binds to a large number of partners, usually by recognition of a phosphoserine or phosphothreonine motif. Binding generally results in the modulation of the activity of the binding partner. Promotes cytosolic retention and inactivation of TFEB transcription factor by binding to phosphorylated TFEB. Induces ARHGEF7 activity on RAC1 as well as lamellipodia and membrane ruffle formation. In neurons, regulates spine maturation through the modulation of ARHGEF7 activity. The chain is 14-3-3 protein zeta/delta (YWHAZ) from Bos taurus (Bovine).